The primary structure comprises 141 residues: Plasmatocyte-spreading peptide (141 aa).

Positions 1-22 (MKLTINILFCLILISQYNSANG) are cleaved as a signal peptide. The propeptide occupies 23 to 118 (NLRDLFNNVR…ATGGKDDKGR (96 aa)). Residues 46–58 (VKTLFHPSDKSGN) show a composition bias toward basic and acidic residues. The interval 46-118 (VKTLFHPSDK…ATGGKDDKGR (73 aa)) is disordered. A compositionally biased stretch (low complexity) spans 83 to 98 (PVAVTPAPVVSTTTQA). The segment covering 99 to 108 (SAPTVATNGT) has biased composition (polar residues). A disulfide bridge connects residues C125 and C137.

This sequence belongs to the GBP/PSP1/paralytic peptide family.

Its function is as follows. Mediates the spreading of plasmatocytes to foreign surfaces. Plasmocytes are a class of hemocytes involved in insect cellular immunity. The polypeptide is Plasmatocyte-spreading peptide (PSP1) (Chrysodeixis includens (Soybean looper)).